Here is a 926-residue protein sequence, read N- to C-terminus: MLQVHRTGLGRLGVSLSKGLHHKAVLAVRREDVNAWERRAPLAPKHIKGITNLGYKVLIQPSNRRAIHDKDYVKAGGILQEDISEACLILGVKRPPEEKLMSRKTYAFFSHTIKAQEANMGLLDEILKQEIRLIDYEKMVDHRGVRVVAFGQWAGVAGMINILHGMGLRLLALGHHTPFMHIGMAHNYRNSSQAVQAVRDAGYEISLGLMPKSIGPLTFVFTGTGNVSKGAQAIFNELPCEYVEPHELKEVSQTGDLRKVYGTVLSRHHHLVRKTDAVYDPAEYDKHPERYISRFNTDIAPYTTCLINGIYWEQNTPRLLTRQDAQSLLAPGKFSPAGVEGCPALPHKLVAICDISADTGGSIEFMTECTTIEHPFCMYDADQHIIHDSVEGSGILMCSIDNLPAQLPIEATECFGDMLYPYVEEMILSDATQPLESQNFSPVVRDAVITSNGTLPDKYKYIQTLRESRERAQSLSMGTRRKVLVLGSGYISEPVLEYLSRDGNIEITVGSDMKNQIEQLGKKYNINPVSMDICKQEEKLGFLVAKQDLVISLLPYVLHPLVAKACITNKVNMVTASYITPALKELEKSVEDAGITIIGELGLDPGLDHMLAMETIDKAKEVGATIESYISYCGGLPAPEHSNNPLRYKFSWSPVGVLMNVMQSATYLLDGKVVNVAGGISFLDAVTSMDFFPGLNLEGYPNRDSTKYAEIYGISSAHTLLRGTLRYKGYMKALNGFVKLGLINREALPAFRPEANPLTWKQLLCDLVGISPSSEHDVLKEAVLKKLGGDNTQLEAAEWLGLLGDEQVPQAESILDALSKHLVMKLSYGPEEKDMIVMRDSFGIRHPSGHLEHKTIDLVAYGDINGFSAMAKTVGLPTAMAAKMLLDGEIGAKGLMGPFSKEIYGPILERIKAEGIIYTTQSTIKP.

A mitochondrion-targeting transit peptide spans 1–27 (MLQVHRTGLGRLGVSLSKGLHHKAVLA). The interval 28–476 (VRREDVNAWE…ESRERAQSLS (449 aa)) is lysine-ketoglutarate reductase. An N6-acetyllysine mark is found at Lys-48 and Lys-56. N6-acetyllysine; alternate is present on Lys-93. Lys-93 is subject to N6-succinyllysine; alternate. An N6-acetyllysine modification is found at Lys-128. N6-acetyllysine; alternate is present on Lys-138. At Lys-138 the chain carries N6-succinyllysine; alternate. Lys-274 is modified (N6-succinyllysine). At Lys-286 the chain carries N6-acetyllysine; alternate. An N6-succinyllysine; alternate modification is found at Lys-286. Lys-333 carries the N6-succinyllysine modification. Lys-458 carries the N6-acetyllysine; alternate modification. N6-succinyllysine; alternate is present on Lys-458. Residues 477–926 (MGTRRKVLVL…IYTTQSTIKP (450 aa)) form a saccharopine dehydrogenase region. Positions 488, 512, and 516 each coordinate NAD(+). N6-acetyllysine; alternate is present on Lys-523. An N6-succinyllysine; alternate modification is found at Lys-523. Ile-533 contributes to the NAD(+) binding site. Lys-535 carries the post-translational modification N6-acetyllysine; alternate. Lys-535 carries the N6-succinyllysine; alternate modification. Residues Leu-554, Ala-576, and Ser-577 each coordinate NAD(+). 577-578 (SY) serves as a coordination point for L-saccharopine. An N6-acetyllysine; alternate modification is found at Lys-584. N6-succinyllysine; alternate is present on Lys-584. NAD(+) is bound by residues Leu-603, Asp-604, and Pro-605. An L-saccharopine-binding site is contributed by Asp-604. Arg-703 contributes to the L-saccharopine binding site. Residue Lys-707 is modified to N6-acetyllysine. 724–726 (TLR) lines the L-saccharopine pocket. Residue Lys-732 is modified to N6-succinyllysine. Lys-739 bears the N6-acetyllysine mark. Lys-761 is subject to N6-acetyllysine; alternate. Position 761 is an N6-succinyllysine; alternate (Lys-761). At Lys-780 the chain carries N6-acetyllysine.

This sequence in the N-terminal section; belongs to the AlaDH/PNT family. In the C-terminal section; belongs to the saccharopine dehydrogenase family. As to quaternary structure, homotetramer. As to expression, expressed in all 16 tissues examined with highest expression in the liver.

The protein localises to the mitochondrion. The enzyme catalyses L-saccharopine + NADP(+) + H2O = L-lysine + 2-oxoglutarate + NADPH + H(+). It catalyses the reaction L-saccharopine + NAD(+) + H2O = (S)-2-amino-6-oxohexanoate + L-glutamate + NADH + H(+). The protein operates within amino-acid degradation; L-lysine degradation via saccharopine pathway; glutaryl-CoA from L-lysine: step 1/6. It participates in amino-acid degradation; L-lysine degradation via saccharopine pathway; glutaryl-CoA from L-lysine: step 2/6. Bifunctional enzyme that catalyzes the first two steps in lysine degradation. The chain is Alpha-aminoadipic semialdehyde synthase, mitochondrial from Homo sapiens (Human).